The primary structure comprises 515 residues: ATP synthase subunit alpha (515 aa).

171 to 178 (GDRQTGKT) contacts ATP.

It belongs to the ATPase alpha/beta chains family. As to quaternary structure, F-type ATPases have 2 components, CF(1) - the catalytic core - and CF(0) - the membrane proton channel. CF(1) has five subunits: alpha(3), beta(3), gamma(1), delta(1), epsilon(1). CF(0) has three main subunits: a(1), b(2) and c(9-12). The alpha and beta chains form an alternating ring which encloses part of the gamma chain. CF(1) is attached to CF(0) by a central stalk formed by the gamma and epsilon chains, while a peripheral stalk is formed by the delta and b chains.

The protein resides in the cell inner membrane. The enzyme catalyses ATP + H2O + 4 H(+)(in) = ADP + phosphate + 5 H(+)(out). Functionally, produces ATP from ADP in the presence of a proton gradient across the membrane. The alpha chain is a regulatory subunit. This is ATP synthase subunit alpha from Xanthomonas campestris pv. campestris (strain 8004).